We begin with the raw amino-acid sequence, 599 residues long: Elongation factor 4 (599 aa).

The 183-residue stretch at 5–187 (SHIRNFSIIA…ALVNGIPAPV (183 aa)) folds into the tr-type G domain. Residues 17-22 (DHGKST) and 134-137 (NKMD) contribute to the GTP site.

It belongs to the TRAFAC class translation factor GTPase superfamily. Classic translation factor GTPase family. LepA subfamily.

Its subcellular location is the cell inner membrane. It carries out the reaction GTP + H2O = GDP + phosphate + H(+). Required for accurate and efficient protein synthesis under certain stress conditions. May act as a fidelity factor of the translation reaction, by catalyzing a one-codon backward translocation of tRNAs on improperly translocated ribosomes. Back-translocation proceeds from a post-translocation (POST) complex to a pre-translocation (PRE) complex, thus giving elongation factor G a second chance to translocate the tRNAs correctly. Binds to ribosomes in a GTP-dependent manner. This chain is Elongation factor 4, found in Teredinibacter turnerae (strain ATCC 39867 / T7901).